The sequence spans 307 residues: MAFQQTLKNKVAFSGIGLHSGKEITLTLRPADAGNGIVFHRIDTTPPVSIEARTENVVSTRLSTTIGKNGAAVSTIEHLMAALFSCGIDNAHVDINGPEVPIMDGSAAPFVEGIRNAGSKSLSKSRKYLVVKKPVTIRDGDKRITVLPSRYYRISFDMHFNHPVINRQFRTMKFDRESFADDFSPARTFGFLAEIEALMAHGLALGASLENAVGIDDNGIVNPEGLRFTDEFVRHKILDSIGDFALAGVHLVGHVKACKSGHELNHKFITELLSRSDCWSLMELTPPENKTASFPISLPEMAWLEAC.

The Zn(2+) site is built by His78, His235, and Asp239. His262 serves as the catalytic Proton donor.

Belongs to the LpxC family. The cofactor is Zn(2+).

The catalysed reaction is a UDP-3-O-[(3R)-3-hydroxyacyl]-N-acetyl-alpha-D-glucosamine + H2O = a UDP-3-O-[(3R)-3-hydroxyacyl]-alpha-D-glucosamine + acetate. The protein operates within glycolipid biosynthesis; lipid IV(A) biosynthesis; lipid IV(A) from (3R)-3-hydroxytetradecanoyl-[acyl-carrier-protein] and UDP-N-acetyl-alpha-D-glucosamine: step 2/6. Functionally, catalyzes the hydrolysis of UDP-3-O-myristoyl-N-acetylglucosamine to form UDP-3-O-myristoylglucosamine and acetate, the committed step in lipid A biosynthesis. This is UDP-3-O-acyl-N-acetylglucosamine deacetylase from Geotalea uraniireducens (strain Rf4) (Geobacter uraniireducens).